A 670-amino-acid polypeptide reads, in one-letter code: DNA ligase (670 aa).

Residues 34–38 (DAEYD), 84–85 (SL), 116–119 (EHKV), Arg139, Glu174, Tyr226, Lys291, and Lys315 each bind NAD(+). Lys118 (N6-AMP-lysine intermediate) is an active-site residue. The Zn(2+) site is built by Cys409, Cys412, Cys425, and Cys430. Residues 586-670 (EVSDLLSGLT…LKEKGAPVPA (85 aa)) form the BRCT domain.

This sequence belongs to the NAD-dependent DNA ligase family. LigA subfamily. The cofactor is Mg(2+).

It catalyses the reaction NAD(+) + (deoxyribonucleotide)n-3'-hydroxyl + 5'-phospho-(deoxyribonucleotide)m = (deoxyribonucleotide)n+m + AMP + beta-nicotinamide D-nucleotide.. In terms of biological role, DNA ligase that catalyzes the formation of phosphodiester linkages between 5'-phosphoryl and 3'-hydroxyl groups in double-stranded DNA using NAD as a coenzyme and as the energy source for the reaction. It is essential for DNA replication and repair of damaged DNA. The chain is DNA ligase from Thermus filiformis.